The sequence spans 474 residues: Trifunctional enzyme subunit beta, mitochondrial (474 aa).

The transit peptide at 1–33 directs the protein to the mitochondrion; sequence MTILTYPFKNLPTASKWALRFSIRPLSCSSQLR. N6-acetyllysine; alternate is present on lysine 72. Lysine 72 is subject to N6-succinyllysine; alternate. Cysteine 138 (acyl-thioester intermediate) is an active-site residue. Residues 173-220 lie within the membrane without spanning it; the sequence is IRHSRKMRKLMLDLNKAKSMGQRLSLISKFRFNFLAPELPAVSEFSTS. Lysine 188 is modified (N6-acetyllysine; alternate). Lysine 188 carries the N6-succinyllysine; alternate modification. Residues lysine 190, lysine 272, and lysine 291 each carry the N6-succinyllysine modification. At lysine 293 the chain carries N6-acetyllysine; alternate. Position 293 is an N6-succinyllysine; alternate (lysine 293). Lysine 298 bears the N6-acetyllysine mark. Lysine 332 carries the N6-acetyllysine; alternate modification. At lysine 332 the chain carries N6-succinyllysine; alternate. Residues lysine 348 and lysine 361 each carry the N6-acetyllysine modification. Cysteine 458 acts as the Proton donor/acceptor in catalysis.

This sequence belongs to the thiolase-like superfamily. Thiolase family. In terms of assembly, heterotetramer of 2 alpha/HADHA and 2 beta/HADHB subunits; forms the mitochondrial trifunctional enzyme. Also purified as higher order heterooligomers including a 4 alpha/HADHA and 4 beta/HADHB heterooligomer which physiological significance remains unclear. The mitochondrial trifunctional enzyme interacts with MTLN. Interacts with RSAD2/viperin.

The protein resides in the mitochondrion. It localises to the mitochondrion inner membrane. Its subcellular location is the mitochondrion outer membrane. It is found in the endoplasmic reticulum. The catalysed reaction is an acyl-CoA + acetyl-CoA = a 3-oxoacyl-CoA + CoA. It carries out the reaction butanoyl-CoA + acetyl-CoA = 3-oxohexanoyl-CoA + CoA. The enzyme catalyses hexanoyl-CoA + acetyl-CoA = 3-oxooctanoyl-CoA + CoA. It catalyses the reaction octanoyl-CoA + acetyl-CoA = 3-oxodecanoyl-CoA + CoA. The catalysed reaction is decanoyl-CoA + acetyl-CoA = 3-oxododecanoyl-CoA + CoA. It carries out the reaction dodecanoyl-CoA + acetyl-CoA = 3-oxotetradecanoyl-CoA + CoA. The enzyme catalyses tetradecanoyl-CoA + acetyl-CoA = 3-oxohexadecanoyl-CoA + CoA. Its pathway is lipid metabolism; fatty acid beta-oxidation. Its function is as follows. Mitochondrial trifunctional enzyme catalyzes the last three of the four reactions of the mitochondrial beta-oxidation pathway. The mitochondrial beta-oxidation pathway is the major energy-producing process in tissues and is performed through four consecutive reactions breaking down fatty acids into acetyl-CoA. Among the enzymes involved in this pathway, the trifunctional enzyme exhibits specificity for long-chain fatty acids. Mitochondrial trifunctional enzyme is a heterotetrameric complex composed of two proteins, the trifunctional enzyme subunit alpha/HADHA carries the 2,3-enoyl-CoA hydratase and the 3-hydroxyacyl-CoA dehydrogenase activities, while the trifunctional enzyme subunit beta/HADHB described here bears the 3-ketoacyl-CoA thiolase activity. This Homo sapiens (Human) protein is Trifunctional enzyme subunit beta, mitochondrial (HADHB).